The following is a 220-amino-acid chain: MELDQDQKVETPEAAENGKDEMQLEEQTQDEDTTETETETETETEAEAEGADGTILERTESVKAKLVPQAEKQIQDEKTGIKEADRAIQEQTQDDETEAEGADGAILKRSESVKVKLIPQAEKQIQDEKTGIKEADRAIQELPANAELAGVKIQAWWRGTLVRRTLLLAILSAWTIQSWWKETKSRLQGRKLHDVMRCRLRNLNLKSISRRKRPNQSSFL.

Positions 1 to 22 (MELDQDQKVETPEAAENGKDEM) are enriched in basic and acidic residues. The disordered stretch occupies residues 1-81 (MELDQDQKVE…KQIQDEKTGI (81 aa)). A compositionally biased stretch (acidic residues) spans 23 to 50 (QLEEQTQDEDTTETETETETETEAEAEG). The stretch at 69 to 93 (QAEKQIQDEKTGIKEADRAIQEQTQ) forms a coiled coil. An IQ domain is found at 146 to 175 (AELAGVKIQAWWRGTLVRRTLLLAILSAWT).

The sequence is that of IQ domain-containing protein F3 (Iqcf3) from Rattus norvegicus (Rat).